A 197-amino-acid polypeptide reads, in one-letter code: Holliday junction branch migration complex subunit RuvA (197 aa).

Residues 1 to 63 (MISSLRGEVL…EDSMTLYGFV (63 aa)) are domain I. Positions 64–139 (DGETRDLFLT…KVGPAGSAAT (76 aa)) are domain II. The tract at residues 139–143 (TAPAV) is flexible linker. Positions 144–197 (NGHTVRAPVVEALVGLGFAAKQAEEATDKVLAGDGEATTSSALRAALSLLGKAR) are domain III.

This sequence belongs to the RuvA family. Homotetramer. Forms an RuvA(8)-RuvB(12)-Holliday junction (HJ) complex. HJ DNA is sandwiched between 2 RuvA tetramers; dsDNA enters through RuvA and exits via RuvB. An RuvB hexamer assembles on each DNA strand where it exits the tetramer. Each RuvB hexamer is contacted by two RuvA subunits (via domain III) on 2 adjacent RuvB subunits; this complex drives branch migration. In the full resolvosome a probable DNA-RuvA(4)-RuvB(12)-RuvC(2) complex forms which resolves the HJ.

It is found in the cytoplasm. Its function is as follows. The RuvA-RuvB-RuvC complex processes Holliday junction (HJ) DNA during genetic recombination and DNA repair, while the RuvA-RuvB complex plays an important role in the rescue of blocked DNA replication forks via replication fork reversal (RFR). RuvA specifically binds to HJ cruciform DNA, conferring on it an open structure. The RuvB hexamer acts as an ATP-dependent pump, pulling dsDNA into and through the RuvAB complex. HJ branch migration allows RuvC to scan DNA until it finds its consensus sequence, where it cleaves and resolves the cruciform DNA. The sequence is that of Holliday junction branch migration complex subunit RuvA from Mycobacterium marinum (strain ATCC BAA-535 / M).